The sequence spans 103 residues: Matrix Gla protein (103 aa).

Residues 1 to 19 (MRSLLLLTVLAALVVAILC) form the signal peptide. Glu-21 carries the post-translational modification 4-carboxyglutamate. Residues Ser-22, Ser-25, and Ser-28 each carry the phosphoserine modification. Positions 51 to 97 (MAKAQERVREQRKPAYELNREACDDYKLCERYAMVYGYNAAYNRYFR) constitute a Gla domain. 4-carboxyglutamate is present on residues Glu-56, Glu-60, Glu-67, and Glu-71. A disulfide bridge links Cys-73 with Cys-79.

Belongs to the osteocalcin/matrix Gla protein family. In terms of processing, requires vitamin K-dependent gamma-carboxylation for its function.

It is found in the secreted. Associates with the organic matrix of bone and cartilage. Thought to act as an inhibitor of bone formation. The protein is Matrix Gla protein (MGP) of Oryctolagus cuniculus (Rabbit).